We begin with the raw amino-acid sequence, 139 residues long: Putative truncated protein trichome birefringence-like 46 (139 aa).

This sequence belongs to the PC-esterase family. TBL subfamily.

The chain is Putative truncated protein trichome birefringence-like 46 (TBL46) from Arabidopsis thaliana (Mouse-ear cress).